The sequence spans 122 residues: UPF0102 protein VV1_0590 (122 aa).

It belongs to the UPF0102 family.

This is UPF0102 protein VV1_0590 from Vibrio vulnificus (strain CMCP6).